Reading from the N-terminus, the 266-residue chain is Dihydropteroate synthase (266 aa).

In terms of domain architecture, Pterin-binding spans 12–260; sequence AAIMGILNVT…DVKANQDIVA (249 aa). A Mg(2+)-binding site is contributed by Asn19. (7,8-dihydropterin-6-yl)methyl diphosphate is bound by residues Thr59, Asp93, Asn112, Asp176, Lys212, and 248-250; that span reads RVH.

It belongs to the DHPS family. In terms of assembly, homodimer or homotrimer. Requires Mg(2+) as cofactor.

The enzyme catalyses (7,8-dihydropterin-6-yl)methyl diphosphate + 4-aminobenzoate = 7,8-dihydropteroate + diphosphate. Its pathway is cofactor biosynthesis; tetrahydrofolate biosynthesis; 7,8-dihydrofolate from 2-amino-4-hydroxy-6-hydroxymethyl-7,8-dihydropteridine diphosphate and 4-aminobenzoate: step 1/2. Functionally, catalyzes the condensation of para-aminobenzoate (pABA) with 6-hydroxymethyl-7,8-dihydropterin diphosphate (DHPt-PP) to form 7,8-dihydropteroate (H2Pte), the immediate precursor of folate derivatives. This is Dihydropteroate synthase (folP) from Streptococcus pyogenes serotype M3 (strain ATCC BAA-595 / MGAS315).